We begin with the raw amino-acid sequence, 162 residues long: uncharacterized protein (162 aa).

4 helical membrane-spanning segments follow: residues I10–L30, I50–N70, I96–L116, and F125–F145.

The protein localises to the cell membrane. This is an uncharacterized protein from Methanocaldococcus jannaschii (strain ATCC 43067 / DSM 2661 / JAL-1 / JCM 10045 / NBRC 100440) (Methanococcus jannaschii).